We begin with the raw amino-acid sequence, 440 residues long: 5-hydroxytryptamine receptor 6 (440 aa).

The Extracellular portion of the chain corresponds to 1–27 (MVPEPGPSANSTPAWGAGPPSAPGGSG). A helical transmembrane segment spans residues 28-52 (WVAAALCVVIALTAAANSLLIALIC). Residues 53–62 (TQPALRNTSN) lie on the Cytoplasmic side of the membrane. The helical transmembrane segment at 63-88 (FFLVSLFTSDLMVGLVVMPPAMLNAL) threads the bilayer. The Extracellular segment spans residues 89–96 (YGRWVLAR). A helical membrane pass occupies residues 97-122 (GLCLLWTAFDVMCCSASILNLCLISL). C99 and C180 are oxidised to a cystine. D106 lines the serotonin pocket. At 123-142 (DRYLLILSPLRYKLRMTPPR) the chain is on the cytoplasmic side. A helical transmembrane segment spans residues 143 to 167 (ALALVLGAWSLAALASFLPLLLGWH). The Extracellular segment spans residues 168-185 (ELGHARPPVPGQCRLLAS). A helical transmembrane segment spans residues 186 to 209 (LPFVLVASGLTFFLPSGAICFTYC). The Cytoplasmic segment spans residues 210-266 (RILLAARKQAVQVASLTTGMASQASETLQVPRTPRPGVESADSRRLATKHSRKALKA). The helical transmembrane segment at 267–293 (SLTLGILLGMFFVTWLPFFVANIVQAV) threads the bilayer. A serotonin-binding site is contributed by N288. At 294-299 (CDCISP) the chain is on the extracellular side. Residues 300 to 323 (GLFDVLTWLGYCNSTMNPIIYPLF) form a helical membrane-spanning segment. Over 324–440 (MRDFKRALGR…RPHPLGIPTN (117 aa)) the chain is Cytoplasmic. The tract at residues 346-392 (ASLASPSLRTSHSGPRPGLSLQQVLPLPLPPDSDSDSDAGSGGSSGL) is disordered. The segment covering 347–358 (SLASPSLRTSHS) has biased composition (polar residues). Residues 362-371 (PGLSLQQVLP) show a composition bias toward low complexity.

Belongs to the G-protein coupled receptor 1 family. Interacts with MTOR, RPTOR and NF1. Interacts with CDK5.

The protein localises to the cell membrane. Its function is as follows. G-protein coupled receptor for 5-hydroxytryptamine (serotonin), a biogenic hormone that functions as a neurotransmitter, a hormone and a mitogen. Also has a high affinity for tricyclic psychotropic drugs. Ligand binding causes a conformation change that triggers signaling via guanine nucleotide-binding proteins (G proteins) and modulates the activity of downstream effectors. HTR6 is coupled to G(s) G alpha proteins and mediates activation of adenylate cyclase activity. Controls pyramidal neurons migration during corticogenesis, through the regulation of CDK5 activity. Is an activator of mTOR signaling. The polypeptide is 5-hydroxytryptamine receptor 6 (HTR6) (Pan troglodytes (Chimpanzee)).